The chain runs to 75 residues: Cytoplasmic envelopment protein 3 (75 aa).

Gly2 carries N-myristoyl glycine; by host lipidation. Acidic residues predominate over residues 53–65; the sequence is EGLEYDEDSENDE. Positions 53–75 are disordered; sequence EGLEYDEDSENDELLFLPNKKPN.

It belongs to the herpesviridae cytoplasmic envelopment protein 3 family. As to quaternary structure, interacts with BGLF2; this interaction is essential for the proper localization of each protein to the assembly complex and thus for the production of infectious virus. In terms of processing, myristoylation and palmitoylation (probably on one or more of the nearby cysteines at the N-terminus) enable membrane-binding and Golgi apparatus-specific targeting and are essential for efficient packaging. Phosphorylated. Phosphorylation does not seem to be required for recycling to the host Golgi apparatus. Packaging is selective for underphosphorylated forms.

Its subcellular location is the virion tegument. It is found in the virion membrane. The protein localises to the host cell membrane. It localises to the host Golgi apparatus membrane. Its function is as follows. Plays an important role in the cytoplasmic envelopment of tegument proteins and capsids during the assembly and egress processes. Also participates in viral entry at the fusion step probably by regulating the core fusion machinery. The protein is Cytoplasmic envelopment protein 3 of Homo sapiens (Human).